The following is a 2290-amino-acid chain: Protein Ycf2 (2290 aa).

1644 to 1651 (GSIGTGRS) contacts ATP.

Belongs to the Ycf2 family.

The protein resides in the plastid. It localises to the chloroplast stroma. Its function is as follows. Probable ATPase of unknown function. Its presence in a non-photosynthetic plant (Epifagus virginiana) and experiments in tobacco indicate that it has an essential function which is probably not related to photosynthesis. This chain is Protein Ycf2, found in Barbarea verna (Land cress).